The primary structure comprises 264 residues: MNTQEIIEALAMLREKKPLVVNITNYVVMNNTANALLALGASPIMAHSQQEMAEMMSFSGALVINIGTLDSVWTPRMHFAVEQANLNNKVVVLDPVGCGASQLRTQTARQIAEAANTLIIRGNASEIIALAGENAQSKGVDALDSSDSALGAACYVAQQYQCSVVISGETDYVVTKEAQYKLNNGHAMMPFVTGMGCTHTALTGAFAAIGDHSGVAATAVLGVAGEIAAEQSAGPGSLQINLLDTLYQLDEETLMNRLKLTVNA.

Met45 contributes to the substrate binding site. The ATP site is built by Arg121 and Ser167. A substrate-binding site is contributed by Gly194.

It belongs to the Thz kinase family. It depends on Mg(2+) as a cofactor.

It catalyses the reaction 5-(2-hydroxyethyl)-4-methylthiazole + ATP = 4-methyl-5-(2-phosphooxyethyl)-thiazole + ADP + H(+). It functions in the pathway cofactor biosynthesis; thiamine diphosphate biosynthesis; 4-methyl-5-(2-phosphoethyl)-thiazole from 5-(2-hydroxyethyl)-4-methylthiazole: step 1/1. In terms of biological role, catalyzes the phosphorylation of the hydroxyl group of 4-methyl-5-beta-hydroxyethylthiazole (THZ). The protein is Hydroxyethylthiazole kinase of Aliivibrio salmonicida (strain LFI1238) (Vibrio salmonicida (strain LFI1238)).